The following is a 78-amino-acid chain: UPF0335 protein RBE_1185 (78 aa).

Belongs to the UPF0335 family.

The polypeptide is UPF0335 protein RBE_1185 (Rickettsia bellii (strain RML369-C)).